The chain runs to 120 residues: MSKIIDILEKEQIRTDLPEFGPGDTLVVQVKIREGNNERLQAFEGICIAKRNRGIGSSFTVRKISHGEGVERVFQTHSPLVSSVTVKRRGDVRRAKLYYLRALQGKAARIKEKLEKKASV.

The protein belongs to the bacterial ribosomal protein bL19 family.

This protein is located at the 30S-50S ribosomal subunit interface and may play a role in the structure and function of the aminoacyl-tRNA binding site. This is Large ribosomal subunit protein bL19 from Dichelobacter nodosus (strain VCS1703A).